A 247-amino-acid chain; its full sequence is ATP synthase subunit a, chloroplastic (247 aa).

Transmembrane regions (helical) follow at residues Gln38–Val58, Val95–Leu115, Ile134–Ser154, Leu199–Leu219, and Gly220–Gly240.

The protein belongs to the ATPase A chain family. F-type ATPases have 2 components, CF(1) - the catalytic core - and CF(0) - the membrane proton channel. CF(1) has five subunits: alpha(3), beta(3), gamma(1), delta(1), epsilon(1). CF(0) has four main subunits: a, b, b' and c.

It is found in the plastid. It localises to the chloroplast thylakoid membrane. Functionally, key component of the proton channel; it plays a direct role in the translocation of protons across the membrane. The polypeptide is ATP synthase subunit a, chloroplastic (Brachypodium distachyon (Purple false brome)).